A 138-amino-acid polypeptide reads, in one-letter code: ATP synthase epsilon chain (138 aa).

Belongs to the ATPase epsilon chain family. In terms of assembly, F-type ATPases have 2 components, CF(1) - the catalytic core - and CF(0) - the membrane proton channel. CF(1) has five subunits: alpha(3), beta(3), gamma(1), delta(1), epsilon(1). CF(0) has three main subunits: a, b and c.

The protein localises to the cell inner membrane. Produces ATP from ADP in the presence of a proton gradient across the membrane. This is ATP synthase epsilon chain from Acidovorax ebreus (strain TPSY) (Diaphorobacter sp. (strain TPSY)).